The sequence spans 205 residues: Ras-related protein Rab-18-B (205 aa).

Residues Ser-17, Gly-20, Lys-21, Ser-22, Ser-23, Asp-34, Pro-35, Thr-40, Gly-66, Lys-123, Asp-125, and Ala-152 each contribute to the GTP site. A Mg(2+)-binding site is contributed by Ser-22. Short sequence motifs (switch) lie at residues 31-45 (DTFD…GVDF) and 63-80 (DTAG…YYRG). Residue Thr-40 coordinates Mg(2+). Cys-198 is lipidated: S-palmitoyl cysteine. Residue Cys-202 is modified to Cysteine methyl ester. Residue Cys-202 is the site of S-geranylgeranyl cysteine attachment. The propeptide at 203-205 (SLV) is removed in mature form.

This sequence belongs to the small GTPase superfamily. Rab family. Mg(2+) is required as a cofactor.

It localises to the endoplasmic reticulum membrane. Its subcellular location is the golgi apparatus. The protein resides in the cis-Golgi network membrane. The protein localises to the lipid droplet. It is found in the apical cell membrane. The enzyme catalyses GTP + H2O = GDP + phosphate + H(+). Its activity is regulated as follows. Regulated by guanine nucleotide exchange factors (GEFs) which promote the exchange of bound GDP for free GTP. Regulated by GTPase activating proteins (GAPs) which increase the GTP hydrolysis activity at the ER membrane. Inhibited by GDP dissociation inhibitors (GDIs) which prevent Rab-GDP dissociation. In terms of biological role, the small GTPases Rab are key regulators of intracellular membrane trafficking, from the formation of transport vesicles to their fusion with membranes. Rabs cycle between an inactive GDP-bound form and an active GTP-bound form that is able to recruit to membranes different sets of downstream effectors directly responsible for vesicle formation, movement, tethering and fusion. Required for the localization of ZFYVE1 to lipid droplets and for its function in mediating the formation of endoplasmic reticulum-lipid droplets (ER-LD) contacts. Also required for maintaining endoplasmic reticulum structure. Plays a role in apical endocytosis/recycling. Plays a key role in eye and brain development and neurodegeneration. The chain is Ras-related protein Rab-18-B (rab18b) from Danio rerio (Zebrafish).